The following is a 343-amino-acid chain: S-adenosylmethionine:tRNA ribosyltransferase-isomerase (343 aa).

This sequence belongs to the QueA family. In terms of assembly, monomer.

It localises to the cytoplasm. The enzyme catalyses 7-aminomethyl-7-carbaguanosine(34) in tRNA + S-adenosyl-L-methionine = epoxyqueuosine(34) in tRNA + adenine + L-methionine + 2 H(+). Its pathway is tRNA modification; tRNA-queuosine biosynthesis. Functionally, transfers and isomerizes the ribose moiety from AdoMet to the 7-aminomethyl group of 7-deazaguanine (preQ1-tRNA) to give epoxyqueuosine (oQ-tRNA). The sequence is that of S-adenosylmethionine:tRNA ribosyltransferase-isomerase from Coxiella burnetii (strain CbuG_Q212) (Coxiella burnetii (strain Q212)).